A 224-amino-acid polypeptide reads, in one-letter code: Lipoprotein-releasing system ATP-binding protein LolD (224 aa).

Residues 4–224 form the ABC transporter domain; that stretch reads YTAKDISKNY…TLLDGSLQEE (221 aa). Residue 40–47 participates in ATP binding; it reads GASGSGKT.

The protein belongs to the ABC transporter superfamily. Lipoprotein translocase (TC 3.A.1.125) family. The complex is composed of two ATP-binding proteins (LolD) and two transmembrane proteins (LolC and LolE).

It is found in the cell inner membrane. In terms of biological role, part of the ABC transporter complex LolCDE involved in the translocation of mature outer membrane-directed lipoproteins, from the inner membrane to the periplasmic chaperone, LolA. Responsible for the formation of the LolA-lipoprotein complex in an ATP-dependent manner. In Desulfotalea psychrophila (strain LSv54 / DSM 12343), this protein is Lipoprotein-releasing system ATP-binding protein LolD.